We begin with the raw amino-acid sequence, 352 residues long: Protein TIFY 6B (352 aa).

The segment at 1–71 is disordered; sequence MERDFLGLGS…KSGNYHLPHS (71 aa). A compositionally biased stretch (basic and acidic residues) spans 17 to 26; that stretch reads VKEETSESSR. Residues 34–54 are compositionally biased toward polar residues; sequence MNWSFSNKVSASSSQFLSFRP. Residues 172–207 enclose the Tify domain; the sequence is PIGSPAQLTIFYAGSVCVYDDISPEKAKAIMLLAGN. The Jas signature appears at 302–326; sequence PLARKASLARFLEKRKERVTSVSPY. The Nuclear localization signal signature appears at 304–311; that stretch reads ARKASLAR.

The protein belongs to the TIFY/JAZ family. Homo- and heterodimer. Interacts with COI1, MYC2, MYC3, MYC4, TIFY10A/JAZ1, TIFY10B/JAZ2, TIFY6A/JAZ4, TIFY5A/JAZ8, TIFY7/JAZ9, TIFY9/JAZ10 and TIFY3A/JAZ11. Interacts (via TIFY domain) with AFPH2/NINJA. In terms of processing, ubiquitinated. Targeted for degradation by the SCF(COI1) E3 ubiquitin ligase-proteasome pathway during jasmonate signaling. As to expression, srtongly expressed in root tips.

The protein localises to the nucleus. Repressor of jasmonate responses. Jasmonoyl-isoleucine (JA-Ile) specifically promotes COI1-TIFY6B/JAZ3 interaction. Acts as a negative regulator of MYC2 function. Feed-back regulated by MYC2. The chain is Protein TIFY 6B (TIFY6B) from Arabidopsis thaliana (Mouse-ear cress).